The sequence spans 335 residues: Mitochondrial uncoupling protein 4C (335 aa).

3 Solcar repeats span residues 34 to 125, 137 to 229, and 238 to 329; these read RNLF…FRRP, LKIY…SKRT, and EGLP…LRQW. The next 6 membrane-spanning stretches (helical) occupy residues 40 to 57, 100 to 118, 138 to 157, 204 to 223, 244 to 264, and 304 to 323; these read YVNTFIGANLAESCVFPL, GFSAMVTRNFIFNSLRVVL, KIYMALGCSFTAGCIAQALA, GVGPSCMRACLMTTGDVGSY, FVSSMCAGLTASVLSTPADVI, and GLMPTWFRLGPFSVLFWLSV.

This sequence belongs to the mitochondrial carrier (TC 2.A.29) family.

Its subcellular location is the mitochondrion inner membrane. In terms of biological role, mitochondrial protein that is likely to be responsible for thermogenic respiration. Likely to function in mitochondrial uncoupling i.e. creating mitochondrial proton leaks across the inner mitochondrial membrane and can therefore dissipate the mitochondrial proton gradient and convert the energy of substrate oxidation into heat instead of ATP. Involved in cold tolerance, it is required for development to the adult stage at low temperatures. The chain is Mitochondrial uncoupling protein 4C from Drosophila melanogaster (Fruit fly).